Consider the following 282-residue polypeptide: Probable endonuclease 4 (282 aa).

Zn(2+)-binding residues include His66, His106, Glu143, Asp177, His180, His214, Asp227, His229, and Glu259.

This sequence belongs to the AP endonuclease 2 family. Requires Zn(2+) as cofactor.

The catalysed reaction is Endonucleolytic cleavage to 5'-phosphooligonucleotide end-products.. Functionally, endonuclease IV plays a role in DNA repair. It cleaves phosphodiester bonds at apurinic or apyrimidinic (AP) sites, generating a 3'-hydroxyl group and a 5'-terminal sugar phosphate. This is Probable endonuclease 4 from Nitratidesulfovibrio vulgaris (strain ATCC 29579 / DSM 644 / CCUG 34227 / NCIMB 8303 / VKM B-1760 / Hildenborough) (Desulfovibrio vulgaris).